Here is a 1023-residue protein sequence, read N- to C-terminus: Sodium/potassium-transporting ATPase subunit alpha-1 (1023 aa).

The propeptide occupies 1–5; the sequence is MGKGV. A compositionally biased stretch (basic and acidic residues) spans 1-11; it reads MGKGVGRDKYE. Residues 1-39 form a disordered region; that stretch reads MGKGVGRDKYEPAAVSEHGDKKGKKAKKERDMDELKKEV. Residues 6–96 are Cytoplasmic-facing; sequence GRDKYEPAAV…PEWVKFCRQL (91 aa). An N6-acetyllysine modification is found at K9. Y10 is subject to Phosphotyrosine. Position 16 is a phosphoserine (S16). K21 carries the N6-acetyllysine modification. Residues 28–39 are compositionally biased toward basic and acidic residues; it reads KERDMDELKKEV. 2 positions are modified to phosphoserine: S40 and S47. The phosphoinositide-3 kinase binding stretch occupies residues 82 to 84; the sequence is PPP. The helical transmembrane segment at 97–117 threads the bilayer; that stretch reads FGGFSMLLWIGAILCFLAYGI. Residues 118–129 are Extracellular-facing; that stretch reads RSATEEEPPNDD. A helical membrane pass occupies residues 130-150; it reads LYLGVVLSAVVIITGCFSYYQ. Residues 151–291 are Cytoplasmic-facing; sequence EAKSSKIMES…TPIAEEIEHF (141 aa). The disordered stretch occupies residues 216-235; it reads SSLTGESEPQTRSPDFTNEN. Residue S228 is modified to Phosphoserine. A Phosphotyrosine modification is found at Y260. A helical transmembrane segment spans residues 292–312; sequence IHLITGVAVFLGVSFFILSLI. At 313-319 the chain is on the extracellular side; sequence LEYTWLE. The chain crosses the membrane as a helical span at residues 320–340; the sequence is AVIFLIGIIVANVPEGLLATV. The Cytoplasmic segment spans residues 341 to 775; it reads TVCLTLTAKR…RLIFDNLKKS (435 aa). Catalysis depends on D376, which acts as the 4-aspartylphosphate intermediate. 2 positions are modified to phosphoserine: S452 and S484. K487 is a binding site for ATP. A Phosphotyrosine modification is found at Y542. The tract at residues 596 to 717 is mediates interaction with SCN7A; that stretch reads RAAVPDAVGK…QGAIVAVTGD (122 aa). K661 bears the N6-succinyllysine mark. Residues S668 and S675 each carry the phosphoserine modification. Mg(2+)-binding residues include D717 and D721. Residues 776 to 798 form a helical membrane-spanning segment; that stretch reads IAYTLTSNIPEITPFLIFIIANI. Over 799 to 801 the chain is Extracellular; it reads PLP. A helical membrane pass occupies residues 802–824; it reads LGTVTILCIDLGTDMVPAISLAY. Residues 825-849 are Cytoplasmic-facing; that stretch reads EQAESDIMKRQPRNPKTDKLVNERL. Residues 850–872 form a helical membrane-spanning segment; that stretch reads ISMAYGQIGMIQALGGFFTYFVI. Topologically, residues 873 to 915 are extracellular; that stretch reads LAENGFLPFHLLGIRETWDDRWVNDVEDSYGQQWTYEQRKIVE. A helical transmembrane segment spans residues 916-936; it reads FTCHTAFFVSIVVVQWADLVI. The Cytoplasmic portion of the chain corresponds to 937–952; the sequence is CKTRRNSVFQQGMKNK. The residue at position 943 (S943) is a Phosphoserine; by PKA. The chain crosses the membrane as a helical span at residues 953–973; that stretch reads ILIFGLFEETALAAFLSYCPG. Residues 974-979 lie on the Extracellular side of the membrane; it reads MGAALR. A helical transmembrane segment spans residues 980 to 1000; it reads MYPLKPTWWFCAFPYSLLIFV. Over 1001 to 1023 the chain is Cytoplasmic; it reads YDEVRKLIIRRRPGGWVEKETYY.

This sequence belongs to the cation transport ATPase (P-type) (TC 3.A.3) family. Type IIC subfamily. In terms of assembly, the sodium/potassium-transporting ATPase is composed of a catalytic alpha subunit, an auxiliary non-catalytic beta subunit and an additional regulatory subunit. Interacts with regulatory subunit FXYD1. Interacts with regulatory subunit FXYD3. Interacts with SIK1. Interacts with SLC35G1 and STIM1. Interacts with CLN3; this interaction regulates the sodium/potassium-transporting ATPase complex localization at the plasma membrane. Interacts with SCN7A; activates ATP1A1 P-type sodium:potassium-exchanging transporter activity which indirectly signals to nearby neurons to regulate sodium homeostasis. Post-translationally, phosphorylation on Tyr-10 modulates pumping activity. Phosphorylation of Ser-943 by PKA modulates the response of ATP1A1 to PKC. Dephosphorylation by protein phosphatase 2A (PP2A) following increases in intracellular sodium, leading to increase catalytic activity.

It is found in the cell membrane. Its subcellular location is the basolateral cell membrane. It localises to the sarcolemma. The protein resides in the cell projection. The protein localises to the axon. It is found in the melanosome. It catalyses the reaction K(+)(out) + Na(+)(in) + ATP + H2O = K(+)(in) + Na(+)(out) + ADP + phosphate + H(+). Its function is as follows. This is the catalytic component of the active enzyme, which catalyzes the hydrolysis of ATP coupled with the exchange of sodium and potassium ions across the plasma membrane. This action creates the electrochemical gradient of sodium and potassium ions, providing the energy for active transport of various nutrients. Could also be part of an osmosensory signaling pathway that senses body-fluid sodium levels and controls salt intake behavior as well as voluntary water intake to regulate sodium homeostasis. The sequence is that of Sodium/potassium-transporting ATPase subunit alpha-1 (Atp1a1) from Mus musculus (Mouse).